We begin with the raw amino-acid sequence, 342 residues long: Pre-mRNA-splicing factor 18 (342 aa).

Methionine 1 is modified (N-acetylmethionine).

The protein belongs to the PRP18 family. As to quaternary structure, heterodimer with PPIH. Interacts with PRPF4 and with the spliceosome. Part of a complex containing U4/U6 snRNPs.

Its subcellular location is the nucleus speckle. Participates in the second step of pre-mRNA splicing. This Bos taurus (Bovine) protein is Pre-mRNA-splicing factor 18 (PRPF18).